Consider the following 233-residue polypeptide: Small ribosomal subunit protein uS5 (233 aa).

Basic and acidic residues-rich tracts occupy residues 1–12 and 39–54; these read MANESEIQKTEN and RGRDGRGRRDDRRNEE. Residues 1 to 54 form a disordered region; the sequence is MANESEIQKTENAEVANAANGTNPNNERRGRGGRGRGGRGRDGRGRRDDRRNEE. One can recognise an S5 DRBM domain in the interval 59 to 122; the sequence is LIEKLVHINR…AAAKKTMIRV (64 aa).

The protein belongs to the universal ribosomal protein uS5 family. As to quaternary structure, part of the 30S ribosomal subunit. Contacts proteins S4 and S8.

With S4 and S12 plays an important role in translational accuracy. Its function is as follows. Located at the back of the 30S subunit body where it stabilizes the conformation of the head with respect to the body. This Zymomonas mobilis subsp. mobilis (strain ATCC 31821 / ZM4 / CP4) protein is Small ribosomal subunit protein uS5.